Here is a 121-residue protein sequence, read N- to C-terminus: Two-component response regulator ORR8 (121 aa).

Positions 5–121 (HVLVVDDTHV…VDVPRIMKYI (117 aa)) constitute a Response regulatory domain. Asp-55 is modified (4-aspartylphosphate).

Belongs to the ARR family. Type-A subfamily. Two-component system major event consists of a His-to-Asp phosphorelay between a sensor histidine kinase (HK) and a response regulator (RR). In plants, the His-to-Asp phosphorelay involves an additional intermediate named Histidine-containing phosphotransfer protein (HPt). This multistep phosphorelay consists of a His-Asp-His-Asp sequential transfer of a phosphate group between first a His and an Asp of the HK protein, followed by the transfer to a conserved His of the HPt protein and finally the transfer to an Asp in the receiver domain of the RR protein. As to expression, expressed in mature leaves, and at low levels in roots, shoots and flowers.

Its function is as follows. Functions as a response regulator involved in His-to-Asp phosphorelay signal transduction system. Phosphorylation of the Asp residue in the receiver domain activates the ability of the protein to promote the transcription of target genes. Type-A response regulators seem to act as negative regulators of the cytokinin signaling. The chain is Two-component response regulator ORR8 from Oryza sativa subsp. indica (Rice).